Here is a 138-residue protein sequence, read N- to C-terminus: ATP synthase epsilon chain (138 aa).

Belongs to the ATPase epsilon chain family. F-type ATPases have 2 components, CF(1) - the catalytic core - and CF(0) - the membrane proton channel. CF(1) has five subunits: alpha(3), beta(3), gamma(1), delta(1), epsilon(1). CF(0) has three main subunits: a, b and c.

Its subcellular location is the cell inner membrane. In terms of biological role, produces ATP from ADP in the presence of a proton gradient across the membrane. This is ATP synthase epsilon chain from Wigglesworthia glossinidia brevipalpis.